The sequence spans 429 residues: 4-hydroxybutyrate coenzyme A transferase (429 aa).

Residue 215–219 (GIGAI) participates in CoA binding. Catalysis depends on E238, which acts as the 5-glutamyl coenzyme A thioester intermediate. Residue G336 coordinates CoA.

The protein belongs to the acetyl-CoA hydrolase/transferase family.

This chain is 4-hydroxybutyrate coenzyme A transferase (cat2), found in Clostridium kluyveri (strain ATCC 8527 / DSM 555 / NBRC 12016 / NCIMB 10680 / K1).